We begin with the raw amino-acid sequence, 388 residues long: Serine/threonine-protein phosphatase sitA (388 aa).

2 residues coordinate Mn(2+): Asp-67 and His-69. The disordered stretch occupies residues 86 to 146 (PDGSEAEAPK…SQRDRSSSSG (61 aa)). Mn(2+) is bound by residues Asp-161 and Asn-193. Residue His-194 is the Proton donor of the active site. Mn(2+)-binding residues include His-243 and His-317.

Belongs to the PPP phosphatase family. PP-6 (PP-V) subfamily. It depends on Mn(2+) as a cofactor.

The enzyme catalyses O-phospho-L-threonyl-[protein] + H2O = L-threonyl-[protein] + phosphate. Its function is as follows. Protein phosphatase that acts as a modulator of pkcA/mpkA activity involved in the cell wall integrity pathway. Plays an important role in regulation of adhesion, cell wall integrity, biofilm formation, and virulence. The chain is Serine/threonine-protein phosphatase sitA from Aspergillus fumigatus (strain ATCC MYA-4609 / CBS 101355 / FGSC A1100 / Af293) (Neosartorya fumigata).